A 576-amino-acid polypeptide reads, in one-letter code: 5'-nucleotidase (576 aa).

The signal sequence occupies residues methionine 1–serine 28. Residues aspartate 38 and histidine 40 each contribute to the Zn(2+) site. Cysteine 53 and cysteine 59 form a disulfide bridge. An N-linked (GlcNAc...) asparagine glycan is attached at asparagine 55. Positions 87, 119, 222, and 245 each coordinate Zn(2+). 3 N-linked (GlcNAc...) asparagine glycosylation sites follow: asparagine 313, asparagine 335, and asparagine 349. Intrachain disulfides connect cysteine 355-cysteine 360 and cysteine 367-cysteine 389. Arginine 356 lines the AMP pocket. Residue arginine 356 coordinates IMP. AMP contacts are provided by asparagine 392 and arginine 397. 2 residues coordinate IMP: asparagine 392 and arginine 397. A glycan (N-linked (GlcNAc...) asparagine) is linked at asparagine 405. An AMP-binding site is contributed by phenylalanine 419. Phenylalanine 419 serves as a coordination point for IMP. Residues cysteine 478 and cysteine 481 are joined by a disulfide bond. Positions 502 and 508 each coordinate AMP. IMP-binding residues include tyrosine 502 and aspartate 508. Residue serine 551 is the site of GPI-anchor amidated serine attachment. The propeptide at alanine 552–glutamine 576 is removed in mature form.

The protein belongs to the 5'-nucleotidase family. Homodimer. Zn(2+) serves as cofactor. In terms of tissue distribution, expressed in the brain.

Its subcellular location is the cell membrane. It carries out the reaction a ribonucleoside 5'-phosphate + H2O = a ribonucleoside + phosphate. The catalysed reaction is a 2'-deoxyribonucleoside 5'-phosphate + H2O = a 2'-deoxyribonucleoside + phosphate. The enzyme catalyses dTMP + H2O = thymidine + phosphate. It catalyses the reaction CMP + H2O = cytidine + phosphate. It carries out the reaction IMP + H2O = inosine + phosphate. The catalysed reaction is AMP + H2O = adenosine + phosphate. The enzyme catalyses GMP + H2O = guanosine + phosphate. It catalyses the reaction UMP + H2O = uridine + phosphate. It carries out the reaction dAMP + H2O = 2'-deoxyadenosine + phosphate. The catalysed reaction is dCMP + H2O = 2'-deoxycytidine + phosphate. Its function is as follows. Catalyzes the hydrolysis of nucleotide monophosphates, releasing inorganic phosphate and the corresponding nucleoside. AMP is the preferred substrate but can also hydrolyze CMP and GMP. Shows a preference for ribonucleotide monophosphates over their equivalent deoxyribose forms. Other substrates include IMP, UMP, dAMP, dCMP, dTMP, NAD and NMN. This is 5'-nucleotidase (Nt5e) from Rattus norvegicus (Rat).